The sequence spans 111 residues: Cytochrome c2 (111 aa).

Heme c-binding residues include cysteine 14, cysteine 17, histidine 18, and methionine 83.

The protein belongs to the cytochrome c family. Binds 1 heme c group covalently per subunit.

Its function is as follows. Cytochrome c2 is found mainly in purple, non-sulfur, photosynthetic bacteria where it functions as the electron donor to the oxidized bacteriochlorophyll in the photophosphorylation pathway. However, it may also have a role in the respiratory chain and is found in some non-photosynthetic bacteria. The sequence is that of Cytochrome c2 from Agrobacterium tumefaciens (strain II Chrys).